A 653-amino-acid polypeptide reads, in one-letter code: Zinc finger protein 59 (653 aa).

One can recognise a KRAB domain in the interval 14-86 (VTFRDVAVDF…VNEETGRPSP (73 aa)). 16 C2H2-type zinc fingers span residues 172-194 (YECK…QSVH), 200-222 (YECK…QKCH), 256-278 (FACR…GLIH), 284-306 (YECN…QKIH), 312-334 (FQCK…QSSH), 340-362 (FECE…QRIH), 368-390 (FECN…QKTH), 396-418 (LECN…LKTH), 424-446 (FKCK…LTVH), 452-474 (YQCK…ESIH), 480-502 (FQCE…QKSH), 508-530 (FECK…KIVH), 536-558 (FECK…GAVH), 564-586 (YECS…RKIH), 592-614 (FKCQ…QSIH), and 620-642 (FECE…LRIH).

Belongs to the krueppel C2H2-type zinc-finger protein family. Expressed predominantly in the testis (at protein level).

The protein resides in the nucleus. In terms of biological role, may have a role during differentiation processes. This chain is Zinc finger protein 59 (Zfp59), found in Mus musculus (Mouse).